A 70-amino-acid chain; its full sequence is MSSPQLPAFLWDKGTLTTAISNPACLVNVLFFFTPLMTLVTLLILVWKVTKDKSNKNRETHPRKEATWLP.

The chain crosses the membrane as a helical span at residues 26 to 46 (LVNVLFFFTPLMTLVTLLILV).

The protein localises to the membrane. The polypeptide is Small integral membrane protein 42 (Homo sapiens (Human)).